The chain runs to 364 residues: Protein IncC (364 aa).

Composition is skewed to basic and acidic residues over residues 1–10 (MGVIHEETAY), 26–42 (ADHR…EATG), and 89–100 (HRPEVGSGRQEK). Disordered regions lie at residues 1-63 (MGVI…ASRV) and 75-102 (VRAG…EKTG).

The protein belongs to the ParA family.

Functionally, this is one of the proteins encoded by the trfB operon; it is involved in plasmid maintenance and replication. In Escherichia coli, this protein is Protein IncC (incC).